Reading from the N-terminus, the 237-residue chain is V-type proton ATPase subunit E (237 aa).

It belongs to the V-ATPase E subunit family. V-ATPase is a heteromultimeric enzyme composed of a peripheral catalytic V1 complex (components A to H) attached to an integral membrane V0 proton pore complex (components: a, c, c', c'' and d).

Subunit of the peripheral V1 complex of vacuolar ATPase essential for assembly or catalytic function. V-ATPase is responsible for acidifying a variety of intracellular compartments in eukaryotic cells. This Gossypium hirsutum (Upland cotton) protein is V-type proton ATPase subunit E (VATE).